Reading from the N-terminus, the 251-residue chain is Probable transcriptional regulatory protein Franean1_5147 (251 aa).

This sequence belongs to the TACO1 family.

It localises to the cytoplasm. The protein is Probable transcriptional regulatory protein Franean1_5147 of Parafrankia sp. (strain EAN1pec).